A 334-amino-acid chain; its full sequence is Formamidase (334 aa).

The CN hydrolase domain maps to 14-260; that stretch reads FLVAAIQFPV…WEIVTGEIYP (247 aa). The active-site Proton acceptor is the glutamate 60. Lysine 133 serves as the catalytic Proton donor. Residue cysteine 166 is the Nucleophile of the active site.

Belongs to the carbon-nitrogen hydrolase superfamily. Aliphatic amidase family.

The enzyme catalyses formamide + H2O = formate + NH4(+). In terms of biological role, is an aliphatic amidase with a restricted substrate specificity, as it only hydrolyzes formamide. The sequence is that of Formamidase from Helicobacter pylori (strain HPAG1).